The sequence spans 438 residues: MGNTSIQTQSYRAVDKDAGQSRSYIIPFALLCSLFFLWAVANNLNDILLPQFQQAFTLTNFQAGLIQSAFYFGYFIIPIPAGILMKKLSYKAGIITGLFLYALGAALFWPAAEIMNYTLFLVGLFIIAAGLGCLETAANPFVTVLGPESSGHFRLNLAQTFNSFGAIIAVVFGQSLILSNVPHQSQDVLDKMSPEQLSAYKHSLVLSVQTPYMIIVAIVLLVALLIMLTKFPALQSDNHSDAKQGSFSASLSRLARIRHWRWAVLAQFCYVGAQTACWSYLIRYAVEEIPGMTAGFAANYLTGTMVCFFIGRFTGTWLISRFAPHKVLAAYALIAMALCLISAFAGGHVGLIALTLCSAFMSIQYPTIFSLGIKNLGQDTKYGSSFIVMTIIGGGIVTPVMGFVSDAAGNIPTAELIPALCFAVIFIFARFRSQTATN.

Residues 2–26 (GNTSIQTQSYRAVDKDAGQSRSYII) are Cytoplasmic-facing. A helical membrane pass occupies residues 27–53 (PFALLCSLFFLWAVANNLNDILLPQFQ). At 54–61 (QAFTLTNF) the chain is on the periplasmic side. A helical membrane pass occupies residues 62–87 (QAGLIQSAFYFGYFIIPIPAGILMKK). Over 88-90 (LSY) the chain is Cytoplasmic. Residues 91–113 (KAGIITGLFLYALGAALFWPAAE) form a helical membrane-spanning segment. Residues 114 to 117 (IMNY) are Periplasmic-facing. Residues 118–144 (TLFLVGLFIIAAGLGCLETAANPFVTV) traverse the membrane as a helical segment. Topologically, residues 145-150 (LGPESS) are cytoplasmic. Residues 151-178 (GHFRLNLAQTFNSFGAIIAVVFGQSLIL) traverse the membrane as a helical segment. Topologically, residues 179 to 193 (SNVPHQSQDVLDKMS) are periplasmic. Residues 194–227 (PEQLSAYKHSLVLSVQTPYMIIVAIVLLVALLIM) form a helical membrane-spanning segment. Residues 228 to 257 (LTKFPALQSDNHSDAKQGSFSASLSRLARI) are Cytoplasmic-facing. The helical transmembrane segment at 258 to 287 (RHWRWAVLAQFCYVGAQTACWSYLIRYAVE) threads the bilayer. Residues 288–293 (EIPGMT) lie on the Periplasmic side of the membrane. A helical membrane pass occupies residues 294 to 319 (AGFAANYLTGTMVCFFIGRFTGTWLI). The Cytoplasmic portion of the chain corresponds to 320–324 (SRFAP). A helical transmembrane segment spans residues 325-343 (HKVLAAYALIAMALCLISA). Residues 344 to 347 (FAGG) are Periplasmic-facing. The helical transmembrane segment at 348-372 (HVGLIALTLCSAFMSIQYPTIFSLG) threads the bilayer. The Cytoplasmic segment spans residues 373–379 (IKNLGQD). The chain crosses the membrane as a helical span at residues 380-407 (TKYGSSFIVMTIIGGGIVTPVMGFVSDA). At 408 to 410 (AGN) the chain is on the periplasmic side. The chain crosses the membrane as a helical span at residues 411–430 (IPTAELIPALCFAVIFIFAR). The Cytoplasmic portion of the chain corresponds to 431 to 438 (FRSQTATN).

This sequence belongs to the major facilitator superfamily. FHS transporter (TC 2.A.1.7) family.

The protein localises to the cell inner membrane. It catalyses the reaction L-fucose(in) + H(+)(in) = L-fucose(out) + H(+)(out). The enzyme catalyses D-arabinose(out) + H(+)(out) = D-arabinose(in) + H(+)(in). The catalysed reaction is L-galactose(out) + H(+)(out) = L-galactose(in) + H(+)(in). Mediates the uptake of L-fucose across the boundary membrane with the concomitant transport of protons into the cell (symport system). Can also transport L-galactose and D-arabinose, but at reduced rates compared with L-fucose. Is not able to transport L-rhamnose and L-arabinose. Binds D-arabinose with the highest affinity, followed by L-fucose, and then by L-galactose. The sequence is that of L-fucose-proton symporter (fucP) from Escherichia coli (strain K12).